Consider the following 129-residue polypeptide: Small ribosomal subunit protein uS11 (129 aa).

Belongs to the universal ribosomal protein uS11 family. Part of the 30S ribosomal subunit. Interacts with proteins S7 and S18. Binds to IF-3.

Functionally, located on the platform of the 30S subunit, it bridges several disparate RNA helices of the 16S rRNA. Forms part of the Shine-Dalgarno cleft in the 70S ribosome. This is Small ribosomal subunit protein uS11 from Methylobacterium radiotolerans (strain ATCC 27329 / DSM 1819 / JCM 2831 / NBRC 15690 / NCIMB 10815 / 0-1).